The following is a 145-amino-acid chain: Peptide methionine sulfoxide reductase MsrB (145 aa).

Positions 6–129 (EEELKQTLTD…NAAALRFVPV (124 aa)) constitute a MsrB domain. Cysteine 118 acts as the Nucleophile in catalysis.

The protein belongs to the MsrB Met sulfoxide reductase family.

The enzyme catalyses L-methionyl-[protein] + [thioredoxin]-disulfide + H2O = L-methionyl-(R)-S-oxide-[protein] + [thioredoxin]-dithiol. The chain is Peptide methionine sulfoxide reductase MsrB from Enterococcus faecalis (strain ATCC 700802 / V583).